A 185-amino-acid polypeptide reads, in one-letter code: Peroxynitrite isomerase (185 aa).

Residues 1 to 21 (MHHPARELPFPDALRPGARPA) are disordered. Residues 34-40 (GTWRGTG) carry the GXWXGXG motif. His171 contacts heme b.

This sequence belongs to the nitrobindin family. As to quaternary structure, homodimer. Heme b is required as a cofactor.

The catalysed reaction is peroxynitrite = nitrate. It functions in the pathway nitrogen metabolism. Functionally, heme-binding protein able to scavenge peroxynitrite and to protect free L-tyrosine against peroxynitrite-mediated nitration, by acting as a peroxynitrite isomerase that converts peroxynitrite to nitrate. Therefore, this protein likely plays a role in peroxynitrite sensing and in the detoxification of reactive nitrogen and oxygen species (RNS and ROS, respectively). Is able to bind nitric oxide (NO) in vitro, but may act as a sensor of peroxynitrite levels in vivo. The chain is Peroxynitrite isomerase from Streptomyces griseus subsp. griseus (strain JCM 4626 / CBS 651.72 / NBRC 13350 / KCC S-0626 / ISP 5235).